The sequence spans 356 residues: Riboflavin biosynthesis protein RibD (356 aa).

Residues 1–148 (MIREIDKNYM…EDFFTYITQE (148 aa)) are deaminase. The region spanning 4–126 (EIDKNYMKLA…KLRNAGIEVD (123 aa)) is the CMP/dCMP-type deaminase domain. H53 serves as a coordination point for Zn(2+). The active-site Proton donor is the E55. Zn(2+) is bound by residues C78 and C87. The segment at 149–356 (RPYITLKWAQ…EDLVIFFKRY (208 aa)) is reductase. Position 157 (A157) interacts with NADP(+). S171 serves as a coordination point for substrate. W173 provides a ligand contact to NADP(+). R187 contributes to the substrate binding site. Residues T199 and D203 each coordinate NADP(+). Residues L207, R210, and E290 each coordinate substrate. 292–298 (GPRTLTS) lines the NADP(+) pocket.

It in the N-terminal section; belongs to the cytidine and deoxycytidylate deaminase family. This sequence in the C-terminal section; belongs to the HTP reductase family. Zn(2+) is required as a cofactor.

It catalyses the reaction 2,5-diamino-6-hydroxy-4-(5-phosphoribosylamino)-pyrimidine + H2O + H(+) = 5-amino-6-(5-phospho-D-ribosylamino)uracil + NH4(+). It carries out the reaction 5-amino-6-(5-phospho-D-ribitylamino)uracil + NADP(+) = 5-amino-6-(5-phospho-D-ribosylamino)uracil + NADPH + H(+). The protein operates within cofactor biosynthesis; riboflavin biosynthesis; 5-amino-6-(D-ribitylamino)uracil from GTP: step 2/4. It participates in cofactor biosynthesis; riboflavin biosynthesis; 5-amino-6-(D-ribitylamino)uracil from GTP: step 3/4. Its function is as follows. Converts 2,5-diamino-6-(ribosylamino)-4(3h)-pyrimidinone 5'-phosphate into 5-amino-6-(ribosylamino)-2,4(1h,3h)-pyrimidinedione 5'-phosphate. The polypeptide is Riboflavin biosynthesis protein RibD (ribD) (Aquifex aeolicus (strain VF5)).